Consider the following 195-residue polypeptide: Imidazoleglycerol-phosphate dehydratase (195 aa).

This sequence belongs to the imidazoleglycerol-phosphate dehydratase family.

It is found in the cytoplasm. The enzyme catalyses D-erythro-1-(imidazol-4-yl)glycerol 3-phosphate = 3-(imidazol-4-yl)-2-oxopropyl phosphate + H2O. It participates in amino-acid biosynthesis; L-histidine biosynthesis; L-histidine from 5-phospho-alpha-D-ribose 1-diphosphate: step 6/9. This Aromatoleum aromaticum (strain DSM 19018 / LMG 30748 / EbN1) (Azoarcus sp. (strain EbN1)) protein is Imidazoleglycerol-phosphate dehydratase.